The following is a 203-amino-acid chain: MSEILELEAESRTEFGTGAARALRRAGRVPAIIYGAGKTPVSISLEEKEITKYYRKPAFISQLINLTIDKKKYKVLPKAVELHPVTDIVRHVDFVFLEEKTQKMEVPVVYEGKERALGVKRGGYFNIVKRRVTLLCDVNNIPRNITIDVTNMPMATSLKSSKIELPKGCSFVTKKEFVLATIIGRRGAKTEAEGEQQAAEAGK.

Belongs to the bacterial ribosomal protein bL25 family. CTC subfamily. In terms of assembly, part of the 50S ribosomal subunit; part of the 5S rRNA/L5/L18/L25 subcomplex. Contacts the 5S rRNA. Binds to the 5S rRNA independently of L5 and L18.

Its function is as follows. This is one of the proteins that binds to the 5S RNA in the ribosome where it forms part of the central protuberance. The chain is Large ribosomal subunit protein bL25 from Rickettsia africae (strain ESF-5).